Here is a 341-residue protein sequence, read N- to C-terminus: GTP 3',8-cyclase (341 aa).

The region spanning 11-231 is the Radical SAM core domain; it reads QKSRPLRDLR…RIINEDMPIE (221 aa). R20 is a GTP binding site. Residues C27 and C31 each contribute to the [4Fe-4S] cluster site. Residue Y33 coordinates S-adenosyl-L-methionine. C34 provides a ligand contact to [4Fe-4S] cluster. R75 provides a ligand contact to GTP. G79 is a binding site for S-adenosyl-L-methionine. T106 contributes to the GTP binding site. Residue S130 participates in S-adenosyl-L-methionine binding. K167 contacts GTP. Position 201 (M201) interacts with S-adenosyl-L-methionine. Positions 265 and 268 each coordinate [4Fe-4S] cluster. Position 270–272 (270–272) interacts with GTP; that stretch reads RAR. C282 serves as a coordination point for [4Fe-4S] cluster.

The protein belongs to the radical SAM superfamily. MoaA family. Monomer and homodimer. Requires [4Fe-4S] cluster as cofactor.

It catalyses the reaction GTP + AH2 + S-adenosyl-L-methionine = (8S)-3',8-cyclo-7,8-dihydroguanosine 5'-triphosphate + 5'-deoxyadenosine + L-methionine + A + H(+). It participates in cofactor biosynthesis; molybdopterin biosynthesis. In terms of biological role, catalyzes the cyclization of GTP to (8S)-3',8-cyclo-7,8-dihydroguanosine 5'-triphosphate. This chain is GTP 3',8-cyclase, found in Bacillus licheniformis (strain ATCC 14580 / DSM 13 / JCM 2505 / CCUG 7422 / NBRC 12200 / NCIMB 9375 / NCTC 10341 / NRRL NRS-1264 / Gibson 46).